The sequence spans 96 residues: Large ribosomal subunit protein bL21 (96 aa).

The protein belongs to the bacterial ribosomal protein bL21 family. As to quaternary structure, part of the 50S ribosomal subunit. Contacts protein L20.

Functionally, this protein binds to 23S rRNA in the presence of protein L20. The polypeptide is Large ribosomal subunit protein bL21 (Chlorobium phaeobacteroides (strain BS1)).